The sequence spans 266 residues: Calpain small subunit 1 (266 aa).

At M1 the chain carries N-acetylmethionine. Phosphoserine is present on S6. The 35-residue stretch at 94–128 (EEVRQFRRLFAQLAGDDMEVSATELMNILNKVVTR) folds into the EF-hand 1; atypical domain. Ca(2+) contacts are provided by A107, D110, E112, E117, D135, D150, D152, T154, K156, and E161. EF-hand domains follow at residues 137–170 (FGLD…NNIK), 167–202 (NNIK…AGFH), 203–231 (LNEH…ISCL), and 232–266 (VRLD…TMYS). At K177 the chain carries N6-acetyllysine. Residues D180, D182, S184, T186, E191, and D223 each contribute to the Ca(2+) site.

In terms of assembly, homodimer or heterodimer of a large (catalytic) and a small (regulatory) subunit. In presence of calcium, the heterodimer dissociates. The N-terminus is blocked.

It localises to the cytoplasm. The protein localises to the cell membrane. Regulatory subunit of the calcium-regulated non-lysosomal thiol-protease which catalyzes limited proteolysis of substrates involved in cytoskeletal remodeling and signal transduction. Essential for embryonic development. The chain is Calpain small subunit 1 (CAPNS1) from Oryctolagus cuniculus (Rabbit).